The primary structure comprises 297 residues: uncharacterized protein (297 aa).

The next 5 helical transmembrane spans lie at 114–136, 150–170, 197–217, 227–247, and 269–289; these read YNRW…LSSG, LLYD…VFNV, MPIV…GVHL, AFTV…KAMI, and FINT…PGLL.

Belongs to the ThrE exporter (TC 2.A.79) family.

The protein resides in the cell inner membrane. This is an uncharacterized protein from Haemophilus influenzae (strain ATCC 51907 / DSM 11121 / KW20 / Rd).